The following is a 325-amino-acid chain: Lipoyl synthase (325 aa).

[4Fe-4S] cluster is bound by residues Cys-71, Cys-76, Cys-82, Cys-97, Cys-101, Cys-104, and Ser-311. Positions 83–300 (FSGGTATFMI…ERQALAMGFT (218 aa)) constitute a Radical SAM core domain.

Belongs to the radical SAM superfamily. Lipoyl synthase family. The cofactor is [4Fe-4S] cluster.

The protein localises to the cytoplasm. The catalysed reaction is [[Fe-S] cluster scaffold protein carrying a second [4Fe-4S](2+) cluster] + N(6)-octanoyl-L-lysyl-[protein] + 2 oxidized [2Fe-2S]-[ferredoxin] + 2 S-adenosyl-L-methionine + 4 H(+) = [[Fe-S] cluster scaffold protein] + N(6)-[(R)-dihydrolipoyl]-L-lysyl-[protein] + 4 Fe(3+) + 2 hydrogen sulfide + 2 5'-deoxyadenosine + 2 L-methionine + 2 reduced [2Fe-2S]-[ferredoxin]. The protein operates within protein modification; protein lipoylation via endogenous pathway; protein N(6)-(lipoyl)lysine from octanoyl-[acyl-carrier-protein]: step 2/2. Its function is as follows. Catalyzes the radical-mediated insertion of two sulfur atoms into the C-6 and C-8 positions of the octanoyl moiety bound to the lipoyl domains of lipoate-dependent enzymes, thereby converting the octanoylated domains into lipoylated derivatives. The protein is Lipoyl synthase of Methylobacillus flagellatus (strain ATCC 51484 / DSM 6875 / VKM B-1610 / KT).